Consider the following 330-residue polypeptide: Ketol-acid reductoisomerase (NADP(+)) (330 aa).

Residues 2 to 182 (ARMYYDEDAN…GGTRAGVLET (181 aa)) form the KARI N-terminal Rossmann domain. NADP(+) is bound by residues 25–28 (YGSQ), S51, S53, and 83–86 (DEVQ). H108 is an active-site residue. Residue G134 participates in NADP(+) binding. Positions 183–328 (TFREETETDL…QDLRAMMSWL (146 aa)) constitute a KARI C-terminal knotted domain. Mg(2+) contacts are provided by D191, E195, E227, and E231. S252 serves as a coordination point for substrate.

Belongs to the ketol-acid reductoisomerase family. The cofactor is Mg(2+).

It carries out the reaction (2R)-2,3-dihydroxy-3-methylbutanoate + NADP(+) = (2S)-2-acetolactate + NADPH + H(+). The enzyme catalyses (2R,3R)-2,3-dihydroxy-3-methylpentanoate + NADP(+) = (S)-2-ethyl-2-hydroxy-3-oxobutanoate + NADPH + H(+). It functions in the pathway amino-acid biosynthesis; L-isoleucine biosynthesis; L-isoleucine from 2-oxobutanoate: step 2/4. It participates in amino-acid biosynthesis; L-valine biosynthesis; L-valine from pyruvate: step 2/4. In terms of biological role, involved in the biosynthesis of branched-chain amino acids (BCAA). Catalyzes an alkyl-migration followed by a ketol-acid reduction of (S)-2-acetolactate (S2AL) to yield (R)-2,3-dihydroxy-isovalerate. In the isomerase reaction, S2AL is rearranged via a Mg-dependent methyl migration to produce 3-hydroxy-3-methyl-2-ketobutyrate (HMKB). In the reductase reaction, this 2-ketoacid undergoes a metal-dependent reduction by NADPH to yield (R)-2,3-dihydroxy-isovalerate. The polypeptide is Ketol-acid reductoisomerase (NADP(+)) (Microcystis aeruginosa (strain NIES-843 / IAM M-2473)).